A 117-amino-acid polypeptide reads, in one-letter code: Prefoldin subunit beta (117 aa).

The protein belongs to the prefoldin subunit beta family. Heterohexamer of two alpha and four beta subunits.

It is found in the cytoplasm. Functionally, molecular chaperone capable of stabilizing a range of proteins. Seems to fulfill an ATP-independent, HSP70-like function in archaeal de novo protein folding. In Thermococcus gammatolerans (strain DSM 15229 / JCM 11827 / EJ3), this protein is Prefoldin subunit beta.